A 175-amino-acid chain; its full sequence is MKTALLLEKLEGQLATLRQRCAPVSQFATLSARFDRHLFQTRATTLQACLDEAGDNLAALRHAVEQQQLPQVAWLAEHLAAQLEAIAREASAWSLREWDSAPPKIARWQRKRIQHQDFERRLREMVAERRARLARVTDLVEQQTLHREVEAYEARLARCRHALEKIENRLARLTR.

The protein belongs to the PriC family. Monomer. Oligomerizes in the absence of DNA. Component of the replication restart primosome, which is composed of PriA, PriB, PriC, DnaB and DnaT; DnaG primase associates transiently with this complex. Interacts with the C-terminus of SSB; this interaction is required for DnaB loading onto substrate replication forks. Interacts with DnaB alone and in the DnaB-DnaC complex, probably 1:1 binding with DnaB.

Its function is as follows. Involved in the restart of stalled replication forks, which reloads the replicative helicase (DnaB) on sites other than the origin of replication. Recognizes abandoned replication forks and remodels DNA single-stranded binding protein (SSB) on ssDNA to uncover a loading site for DnaB. There are several restart pathways, the PriA-PriC pathway is a minor restart pathway. Also part of the minor PriC-Rep pathway for restart of stalled replication forks, which has a different substrate specificity than PriA. priB and priC have redundant roles in the cell. Stimulates the 3'-5' helicase activity of Rep helicase in vitro. In vitro can load the DnaB replicative helicase from a DnaB-DnaC complex on an SSB-coated stalled replication fork with no leading- or lagging-strand (or with a gap between the leading strand and fork junction) in the absence of other primosome proteins (PriA, PriB or DnaT). Also part of the major restart pathway with PriA, PriB, DnaB, DnaT and DnaG primase. PriC may contribute to the stability of the preprimosome complex. Preferentially binds approximately 7-9 nucleotides of single-stranded (ss)DNA, also binds double-stranded (ds)DNA. PriB is probably more important in the cell than PriC. The polypeptide is Replication restart protein PriC (Escherichia coli (strain K12)).